The primary structure comprises 179 residues: Stathmin-2 (179 aa).

The tract at residues 1-26 (MAKTAMAYKEKMKELSMLSLICSCFY) is membrane attachment. 6 positions are modified to phosphoserine: Ser16, Ser50, Ser62, Ser73, Ser80, and Ser97. One can recognise an SLD domain in the interval 38–179 (DDMEVKQINK…NKELQVELSG (142 aa)). Residues 39–96 (DMEVKQINKRASGQAFELILKPPSPVSEAPRTLASPKKKELSLEEIQKKLEAAEERRK) form a regulatory/phosphorylation domain region. The stretch at 74-179 (PKKKELSLEE…NKELQVELSG (106 aa)) forms a coiled coil.

The protein belongs to the stathmin family. In terms of tissue distribution, expression is neuron-specific and found in cerebellum, forebrain, midbrain, tectum and spinal cord.

It localises to the cytoplasm. It is found in the perinuclear region. The protein resides in the cell projection. Its subcellular location is the growth cone. The protein localises to the membrane. It localises to the axon. It is found in the lamellipodium. Is a key regulator of neurite extension through regulation of microtubule instabilily. The sequence is that of Stathmin-2 (STMN2) from Gallus gallus (Chicken).